The sequence spans 216 residues: Adenylate kinase (216 aa).

Glycine 10–threonine 15 lines the ATP pocket. Residues serine 30–valine 59 are NMP. Residues threonine 31, arginine 36, aspartate 57–valine 59, glycine 85–arginine 88, and glutamine 92 contribute to the AMP site. An LID region spans residues glycine 126–aspartate 163. An ATP-binding site is contributed by arginine 127. Cysteine 130 and cysteine 133 together coordinate Zn(2+). Threonine 136–tyrosine 137 provides a ligand contact to ATP. The Zn(2+) site is built by cysteine 150 and cysteine 153. Residues arginine 160 and arginine 171 each coordinate AMP. Glutamine 199 is a binding site for ATP.

This sequence belongs to the adenylate kinase family. In terms of assembly, monomer.

It is found in the cytoplasm. The catalysed reaction is AMP + ATP = 2 ADP. The protein operates within purine metabolism; AMP biosynthesis via salvage pathway; AMP from ADP: step 1/1. Its function is as follows. Catalyzes the reversible transfer of the terminal phosphate group between ATP and AMP. Plays an important role in cellular energy homeostasis and in adenine nucleotide metabolism. The chain is Adenylate kinase from Geobacillus sp. (strain WCH70).